We begin with the raw amino-acid sequence, 512 residues long: tRNA-guanine(15) transglycosylase (512 aa).

The active-site Nucleophile is Asp-85. Substrate is bound at residue Asp-120. Zn(2+) is bound by residues Cys-272, Cys-274, and Cys-277.

It belongs to the archaeosine tRNA-ribosyltransferase family. The cofactor is Zn(2+).

It carries out the reaction guanosine(15) in tRNA + 7-cyano-7-deazaguanine = 7-cyano-7-carbaguanosine(15) in tRNA + guanine. Its pathway is tRNA modification; archaeosine-tRNA biosynthesis. In terms of biological role, exchanges the guanine residue with 7-cyano-7-deazaguanine (preQ0) at position 15 in the dihydrouridine loop (D-loop) of archaeal tRNAs. The protein is tRNA-guanine(15) transglycosylase of Aeropyrum pernix (strain ATCC 700893 / DSM 11879 / JCM 9820 / NBRC 100138 / K1).